We begin with the raw amino-acid sequence, 292 residues long: Ribosomal RNA small subunit methyltransferase I (292 aa).

Belongs to the methyltransferase superfamily. RsmI family.

The protein localises to the cytoplasm. It catalyses the reaction cytidine(1402) in 16S rRNA + S-adenosyl-L-methionine = 2'-O-methylcytidine(1402) in 16S rRNA + S-adenosyl-L-homocysteine + H(+). Functionally, catalyzes the 2'-O-methylation of the ribose of cytidine 1402 (C1402) in 16S rRNA. This Buchnera aphidicola subsp. Baizongia pistaciae (strain Bp) protein is Ribosomal RNA small subunit methyltransferase I.